A 205-amino-acid chain; its full sequence is Polyamine-modulated factor 1 (205 aa).

Positions 1-30 are disordered; the sequence is MAEASSANLGSGCEEKRHEGSSSESVPPGT. Positions 141 to 193 form a coiled coil; the sequence is FLQQRDTLRRHVQKQEAENQQLADAVLAGRRQVEELQLQVQAQQQAWQALHRE.

In terms of assembly, component of the MIS12 complex composed of MIS12, DSN1, NSL1 and PMF1. Interacts with COPS7A. Interacts via its coiled-coil domain with the leucine-zipper domain of NFE2L2. The interaction with NFE2L2 is required for the transcriptional regulation of SSAT. Highest levels of expression in heart and skeletal muscle, with significant levels expressed in kidney and liver.

Its subcellular location is the nucleus. The protein localises to the chromosome. The protein resides in the centromere. It is found in the kinetochore. Part of the MIS12 complex which is required for normal chromosome alignment and segregation and kinetochore formation during mitosis. May act as a cotranscription partner of NFE2L2 involved in regulation of polyamine-induced transcription of SSAT. This is Polyamine-modulated factor 1 from Homo sapiens (Human).